Here is a 137-residue protein sequence, read N- to C-terminus: Large ribosomal subunit protein uL16c (137 aa).

The protein belongs to the universal ribosomal protein uL16 family. As to quaternary structure, part of the 50S ribosomal subunit.

It is found in the plastid. The protein resides in the chloroplast. This Hordeum vulgare (Barley) protein is Large ribosomal subunit protein uL16c.